A 526-amino-acid chain; its full sequence is GMP synthase [glutamine-hydrolyzing] (526 aa).

Residues 3 to 199 form the Glutamine amidotransferase type-1 domain; sequence RVAIIDFGSQ…FVRIAGCDNN (197 aa). C83 serves as the catalytic Nucleophile. Catalysis depends on residues H174 and E176. Residues 200-392 enclose the GMPS ATP-PPase domain; sequence WTVESFLDEQ…LGISDEILMR (193 aa). An ATP-binding site is contributed by 227-233; sequence SGGVDSS.

Homodimer.

It catalyses the reaction XMP + L-glutamine + ATP + H2O = GMP + L-glutamate + AMP + diphosphate + 2 H(+). Its pathway is purine metabolism; GMP biosynthesis; GMP from XMP (L-Gln route): step 1/1. Its function is as follows. Catalyzes the synthesis of GMP from XMP. This chain is GMP synthase [glutamine-hydrolyzing], found in Ehrlichia chaffeensis (strain ATCC CRL-10679 / Arkansas).